The chain runs to 316 residues: Spermidine synthase (316 aa).

The PABS domain maps to 25 to 262 (PGWFSEISPM…GVIGFMLCST (238 aa)). Residue Gln-56 participates in S-adenosyl 3-(methylsulfanyl)propylamine binding. Tyr-86 provides a ligand contact to putrescine. Residues Gln-87, Asp-111, Glu-131, 162–163 (DG), and Asp-181 contribute to the S-adenosyl 3-(methylsulfanyl)propylamine site. Asp-181 serves as the catalytic Proton acceptor. Putrescine is bound by residues 181 to 184 (DSSD) and Tyr-250.

It belongs to the spermidine/spermine synthase family.

It carries out the reaction S-adenosyl 3-(methylsulfanyl)propylamine + putrescine = S-methyl-5'-thioadenosine + spermidine + H(+). It participates in amine and polyamine biosynthesis; spermidine biosynthesis; spermidine from putrescine: step 1/1. In Coffea arabica (Arabian coffee), this protein is Spermidine synthase.